We begin with the raw amino-acid sequence, 506 residues long: Lysine--tRNA ligase (506 aa).

The Mg(2+) site is built by E411 and E418.

Belongs to the class-II aminoacyl-tRNA synthetase family. As to quaternary structure, homodimer. It depends on Mg(2+) as a cofactor.

It is found in the cytoplasm. It catalyses the reaction tRNA(Lys) + L-lysine + ATP = L-lysyl-tRNA(Lys) + AMP + diphosphate. The sequence is that of Lysine--tRNA ligase from Thermosynechococcus vestitus (strain NIES-2133 / IAM M-273 / BP-1).